The sequence spans 136 residues: MSSFGHRAFFSCCPLLEGETLHSIKLRKEATYQTQSGWPVRWPIRYPRALPLESHVHPYHMIVKLPHPRTQPRLFLWLSLHWTGIPFLGKPGIGRNRVKSKQFSHFQQSKIKTTMRKKTTNRKQKAERCQYRLVTA.

This is an uncharacterized protein from Saccharomyces cerevisiae (strain ATCC 204508 / S288c) (Baker's yeast).